The chain runs to 313 residues: tRNA dimethylallyltransferase 2 (313 aa).

An ATP-binding site is contributed by 16–23; sequence GPTASGKT. 18–23 provides a ligand contact to substrate; that stretch reads TASGKT. 2 interaction with substrate tRNA regions span residues 41–44 and 161–165; these read DSRQ and QRTIR.

It belongs to the IPP transferase family. As to quaternary structure, monomer. Mg(2+) is required as a cofactor.

It carries out the reaction adenosine(37) in tRNA + dimethylallyl diphosphate = N(6)-dimethylallyladenosine(37) in tRNA + diphosphate. Functionally, catalyzes the transfer of a dimethylallyl group onto the adenine at position 37 in tRNAs that read codons beginning with uridine, leading to the formation of N6-(dimethylallyl)adenosine (i(6)A). The polypeptide is tRNA dimethylallyltransferase 2 (Pelobacter propionicus (strain DSM 2379 / NBRC 103807 / OttBd1)).